A 345-amino-acid polypeptide reads, in one-letter code: MKPWAAFHLIFLVASSLEGEVSNYGTGGTQDTEPTCRTEHQCTRDKIILQSQPGIPGIPGVPGTNGSEGLKGDPGPQGPPGIRGPDGIRGEAGPKGDKGDQGDKGDKGDKGDKGEDCNLDGCLPTEVRNCQDLLEHGEILNGWYTIYPTKENPMVVFCDMETDGGGWLVFQRRQDGSVDFYLDWESYKKGFGKQESEFWLGNDKIHLLTSSGTQQLRIDLEDFEGSRTFAKYSSFSIGDENEKYRLIVGSYLDGSMNDSFRIHNGHSFSTKDRDNDTNKGNCAMMYKGAWWYFHCHHANLNGLYYKGKHANYADGINWRSGKGYYYSYKYADMKIRPQQSETTVS.

The N-terminal stretch at 1–19 (MKPWAAFHLIFLVASSLEG) is a signal peptide. Residues 48–118 (ILQSQPGIPG…DKGDKGEDCN (71 aa)) form a disordered region. The region spanning 57-114 (GIPGVPGTNGSEGLKGDPGPQGPPGIRGPDGIRGEAGPKGDKGDQGDKGDKGDKGDKG) is the Collagen-like domain. A compositionally biased stretch (basic and acidic residues) spans 86–116 (DGIRGEAGPKGDKGDQGDKGDKGDKGDKGED). One can recognise a Fibrinogen C-terminal domain in the interval 121-339 (GCLPTEVRNC…YADMKIRPQQ (219 aa)). Cystine bridges form between Cys130–Cys158 and Cys282–Cys295.

Belongs to the ficolin lectin family. Veficolin subfamily. In terms of processing, hydroxylated, possibly at Pro-80. As to expression, expressed by the venom duct.

The protein resides in the secreted. Functionally, initiates complement activation and/or interferes in platelet aggregation and/or blood coagulation. The polypeptide is Ryncolin-1 (Cerberus rynchops (Dog-faced water snake)).